Consider the following 115-residue polypeptide: Virulence-associated protein A' (115 aa).

One can recognise an HTH cro/C1-type domain in the interval 16–70; that stretch reads IKSDLDGLGINITEAAKALDVTRAALSEIINGKRGISAKMAWKLSKAFTNSDPEF. The segment at residues 27 to 46 is a DNA-binding region (H-T-H motif); that stretch reads ITEAAKALDVTRAALSEIIN.

The protein belongs to the VapA/VapI family.

The chain is Virulence-associated protein A' (vapA') from Dichelobacter nodosus (Bacteroides nodosus).